The following is a 96-amino-acid chain: Small ribosomal subunit protein bS18 (96 aa).

The protein belongs to the bacterial ribosomal protein bS18 family. As to quaternary structure, part of the 30S ribosomal subunit. Forms a tight heterodimer with protein bS6.

Binds as a heterodimer with protein bS6 to the central domain of the 16S rRNA, where it helps stabilize the platform of the 30S subunit. In Borrelia garinii subsp. bavariensis (strain ATCC BAA-2496 / DSM 23469 / PBi) (Borreliella bavariensis), this protein is Small ribosomal subunit protein bS18.